The following is a 541-amino-acid chain: Catalase (541 aa).

Residues 1–20 (MPQTKGKPHEEQLEQYKNSQ) are disordered. Catalysis depends on residues histidine 74 and asparagine 147. Tyrosine 357 contributes to the heme binding site.

Belongs to the catalase family. Requires heme as cofactor.

The protein localises to the peroxisome matrix. It catalyses the reaction 2 H2O2 = O2 + 2 H2O. Its function is as follows. Catalyzes the degradation of hydrogen peroxide (H(2)O(2)) generated by peroxisomal oxidases to water and oxygen, thereby protecting cells from the toxic effects of hydrogen peroxide. In Ascaris suum (Pig roundworm), this protein is Catalase (CAT).